The chain runs to 230 residues: TorCAD operon transcriptional regulatory protein TorR (230 aa).

The Response regulatory domain maps to 4–117 (HIVIVEDEPV…ELVVRVKNLL (114 aa)). Asp53 is subject to 4-aspartylphosphate. The segment at residues 132–227 (DNCYRFAGYC…QHGEGYFLAA (96 aa)) is a DNA-binding region (ompR/PhoB-type).

In terms of processing, phosphorylated and dephosphorylated by TorS.

The protein resides in the cytoplasm. Its function is as follows. Member of the two-component regulatory system TorS/TorR involved in the anaerobic utilization of trimethylamine-N-oxide (TMAO). Phosphorylated TorR activates the transcription of the torCAD operon by binding to four decameric boxes located in the torCAD promoter. Box1, 2 and 4 contain the DNA sequence 5'-CTGTTCATAT-3' and box3 contains the DNA sequence 5'-CCGTTCATCC-3'. Phosphorylated as well as unphosphorylated TorR negatively regulates its own expression by binding to box1 and 2. This is TorCAD operon transcriptional regulatory protein TorR (torR) from Escherichia coli O157:H7.